The following is a 143-amino-acid chain: Probable cyclic pyranopterin monophosphate synthase (143 aa).

Residues 61–63 (MCH) and 97–98 (ME) contribute to the substrate site. D112 is a catalytic residue.

Belongs to the MoaC family. In terms of assembly, homohexamer; trimer of dimers.

The enzyme catalyses (8S)-3',8-cyclo-7,8-dihydroguanosine 5'-triphosphate = cyclic pyranopterin phosphate + diphosphate. The protein operates within cofactor biosynthesis; molybdopterin biosynthesis. Functionally, catalyzes the conversion of (8S)-3',8-cyclo-7,8-dihydroguanosine 5'-triphosphate to cyclic pyranopterin monophosphate (cPMP). This Sulfolobus acidocaldarius (strain ATCC 33909 / DSM 639 / JCM 8929 / NBRC 15157 / NCIMB 11770) protein is Probable cyclic pyranopterin monophosphate synthase.